The following is a 266-amino-acid chain: Putative carbamate hydrolase RutD (266 aa).

Belongs to the AB hydrolase superfamily. Hydrolase RutD family.

The catalysed reaction is carbamate + 2 H(+) = NH4(+) + CO2. Its function is as follows. Involved in pyrimidine catabolism. May facilitate the hydrolysis of carbamate, a reaction that can also occur spontaneously. In Escherichia coli O103:H2 (strain 12009 / EHEC), this protein is Putative carbamate hydrolase RutD.